The chain runs to 177 residues: MSRVGKLPITIPEGIKIGLNDLEVKISGPKGELSKTFKGNIAISLAENKLLVKPLAANKNARAMWGTARSIISNMVTGVKEGFKLKLEINGVGYRAMVKGKYLNLMLAKSHNTKIEIPSDIKIEVPKQNIIILEGTDKEKLGQFASIIIKQRPPEPYKGKGIKFENQFIPRKEGKKN.

Belongs to the universal ribosomal protein uL6 family. As to quaternary structure, part of the 50S ribosomal subunit.

Its function is as follows. This protein binds to the 23S rRNA, and is important in its secondary structure. It is located near the subunit interface in the base of the L7/L12 stalk, and near the tRNA binding site of the peptidyltransferase center. This chain is Large ribosomal subunit protein uL6, found in Rickettsia africae (strain ESF-5).